Consider the following 121-residue polypeptide: uncharacterized protein (121 aa).

Residues 47 to 101 form the Cupin type-2 domain; it reads SEVPHYHAEHDLTFTVLKGKGELYLEGEKKKLKEGDWAFIPKGAVHFYRNTSELS.

This is an uncharacterized protein from Aquifex aeolicus (strain VF5).